The following is a 172-amino-acid chain: Histone H1-like protein HC2 (172 aa).

Positions Met1–Lys77 are disordered. Positions Gln8 to Lys77 are enriched in basic residues.

This sequence belongs to the histone H1/H5 family. HCT subfamily.

Might have a role in establishing the nucleoid structure of elementary bodies. In Chlamydia pneumoniae (Chlamydophila pneumoniae), this protein is Histone H1-like protein HC2 (hctB).